Here is a 398-residue protein sequence, read N- to C-terminus: Argininosuccinate synthase (398 aa).

9 to 17 lines the ATP pocket; it reads AYSGGLDTS. L-citrulline-binding residues include Y87 and S92. Residue G117 coordinates ATP. Positions 119, 123, and 124 each coordinate L-aspartate. N123 is a binding site for L-citrulline. R127, S176, S185, E261, and Y273 together coordinate L-citrulline.

This sequence belongs to the argininosuccinate synthase family. Type 1 subfamily. Homotetramer.

The protein localises to the cytoplasm. It carries out the reaction L-citrulline + L-aspartate + ATP = 2-(N(omega)-L-arginino)succinate + AMP + diphosphate + H(+). It functions in the pathway amino-acid biosynthesis; L-arginine biosynthesis; L-arginine from L-ornithine and carbamoyl phosphate: step 2/3. The sequence is that of Argininosuccinate synthase from Clostridium tetani (strain Massachusetts / E88).